A 632-amino-acid polypeptide reads, in one-letter code: Phosphomethylpyrimidine synthase (632 aa).

Residues 1 to 13 are compositionally biased toward polar residues; sequence MNIRSNPDTTLPA. Positions 1 to 26 are disordered; sequence MNIRSNPDTTLPAVTTGPLPSSRKIF. Substrate contacts are provided by residues Asn221, Met250, Tyr279, His315, 335-337, 376-379, and Glu415; these read SRG and DGLR. A Zn(2+)-binding site is contributed by His419. Tyr442 serves as a coordination point for substrate. His483 is a Zn(2+) binding site. Residues Cys563, Cys566, and Cys571 each contribute to the [4Fe-4S] cluster site.

It belongs to the ThiC family. Homodimer. [4Fe-4S] cluster is required as a cofactor.

It carries out the reaction 5-amino-1-(5-phospho-beta-D-ribosyl)imidazole + S-adenosyl-L-methionine = 4-amino-2-methyl-5-(phosphooxymethyl)pyrimidine + CO + 5'-deoxyadenosine + formate + L-methionine + 3 H(+). The protein operates within cofactor biosynthesis; thiamine diphosphate biosynthesis. Functionally, catalyzes the synthesis of the hydroxymethylpyrimidine phosphate (HMP-P) moiety of thiamine from aminoimidazole ribotide (AIR) in a radical S-adenosyl-L-methionine (SAM)-dependent reaction. In Afipia carboxidovorans (strain ATCC 49405 / DSM 1227 / KCTC 32145 / OM5) (Oligotropha carboxidovorans), this protein is Phosphomethylpyrimidine synthase.